A 310-amino-acid polypeptide reads, in one-letter code: p-hydroxybenzoic acid efflux pump subunit AaeA (310 aa).

Residues 12–32 traverse the membrane as a helical segment; that stretch reads AITVVLVVLAFIAIFRAWSFY.

Belongs to the membrane fusion protein (MFP) (TC 8.A.1) family.

The protein resides in the cell inner membrane. In terms of biological role, forms an efflux pump with AaeB. This Cronobacter sakazakii (strain ATCC BAA-894) (Enterobacter sakazakii) protein is p-hydroxybenzoic acid efflux pump subunit AaeA.